A 410-amino-acid polypeptide reads, in one-letter code: Arginine deiminase (410 aa).

Residue cysteine 399 is the Amidino-cysteine intermediate of the active site.

The protein belongs to the arginine deiminase family.

It localises to the cytoplasm. It catalyses the reaction L-arginine + H2O = L-citrulline + NH4(+). The protein operates within amino-acid degradation; L-arginine degradation via ADI pathway; carbamoyl phosphate from L-arginine: step 1/2. The sequence is that of Arginine deiminase from Treponema denticola (strain ATCC 35405 / DSM 14222 / CIP 103919 / JCM 8153 / KCTC 15104).